Consider the following 530-residue polypeptide: tRNA-2-methylthio-N(6)-dimethylallyladenosine synthase (530 aa).

The region spanning 19–134 (RTYEVRTYGC…LPTLLERARH (116 aa)) is the MTTase N-terminal domain. [4Fe-4S] cluster contacts are provided by C28, C63, C97, C171, C175, and C178. In terms of domain architecture, Radical SAM core spans 157 to 387 (RDEIASGWVS…TALQERISHE (231 aa)). Residues 390–460 (QRVVGRTVEV…PFHLIADSVD (71 aa)) form the TRAM domain. The segment at 509–530 (VPTTASTSAPVGDGSAHPRHRA) is disordered.

This sequence belongs to the methylthiotransferase family. MiaB subfamily. Monomer. The cofactor is [4Fe-4S] cluster.

Its subcellular location is the cytoplasm. The enzyme catalyses N(6)-dimethylallyladenosine(37) in tRNA + (sulfur carrier)-SH + AH2 + 2 S-adenosyl-L-methionine = 2-methylsulfanyl-N(6)-dimethylallyladenosine(37) in tRNA + (sulfur carrier)-H + 5'-deoxyadenosine + L-methionine + A + S-adenosyl-L-homocysteine + 2 H(+). Its function is as follows. Catalyzes the methylthiolation of N6-(dimethylallyl)adenosine (i(6)A), leading to the formation of 2-methylthio-N6-(dimethylallyl)adenosine (ms(2)i(6)A) at position 37 in tRNAs that read codons beginning with uridine. This is tRNA-2-methylthio-N(6)-dimethylallyladenosine synthase from Clavibacter sepedonicus (Clavibacter michiganensis subsp. sepedonicus).